A 130-amino-acid chain; its full sequence is uncharacterized protein (130 aa).

This is an uncharacterized protein from Escherichia coli (strain K12).